The primary structure comprises 209 residues: Small ribosomal subunit protein uS4 (209 aa).

Residues 99–162 (RRLDNVVYRL…RESNKFQEMK (64 aa)) form the S4 RNA-binding domain.

It belongs to the universal ribosomal protein uS4 family. Part of the 30S ribosomal subunit. Contacts protein S5. The interaction surface between S4 and S5 is involved in control of translational fidelity.

In terms of biological role, one of the primary rRNA binding proteins, it binds directly to 16S rRNA where it nucleates assembly of the body of the 30S subunit. With S5 and S12 plays an important role in translational accuracy. The polypeptide is Small ribosomal subunit protein uS4 (Syntrophomonas wolfei subsp. wolfei (strain DSM 2245B / Goettingen)).